The following is a 262-amino-acid chain: MQVDLLSSAQSAHALHLFHQHSPLVHCMTNDVVQTFTANTLLALGASPAMVIETEEASQFAAIASALLINVGTLTQPRAQAMRAAVEQAKSSQTPWTLDPVAVGALDYRRHFCHELLSFKPAAIRGNASEIMALAGIANGGRGVDTTDAAANAIPAAQTLARETGAIVVVTGEVDYVTDGHRAVGIHGGDPLMTKVVGTGCALSAVVAACCALPGDTLENVASACHWMKQAGERAVARSEGPGSFVPHFLDALWQLTQEVQA.

Residue M50 coordinates substrate. Positions 125 and 171 each coordinate ATP. A substrate-binding site is contributed by G198.

Belongs to the Thz kinase family. Requires Mg(2+) as cofactor.

The catalysed reaction is 5-(2-hydroxyethyl)-4-methylthiazole + ATP = 4-methyl-5-(2-phosphooxyethyl)-thiazole + ADP + H(+). Its pathway is cofactor biosynthesis; thiamine diphosphate biosynthesis; 4-methyl-5-(2-phosphoethyl)-thiazole from 5-(2-hydroxyethyl)-4-methylthiazole: step 1/1. In terms of biological role, catalyzes the phosphorylation of the hydroxyl group of 4-methyl-5-beta-hydroxyethylthiazole (THZ). The protein is Hydroxyethylthiazole kinase of Escherichia coli (strain 55989 / EAEC).